Reading from the N-terminus, the 1530-residue chain is Synaptonemal complex protein 2 (1530 aa).

A compositionally biased stretch (basic and acidic residues) spans 439–461; that stretch reads EKSKSPKEFAKPSKYIKNSDKGN. Positions 439-480 are disordered; that stretch reads EKSKSPKEFAKPSKYIKNSDKGNRNNSQLEKTTPSKRKMSEA. S457 and S465 each carry phosphoserine. Residue T471 is modified to Phosphothreonine. Phosphoserine is present on residues S494, S519, S529, and S538. The tract at residues 496-555 is disordered; that stretch reads VLFSNTSIPPRRRRIKPPLQMTSSAEKPSVSQTSENRVDNAASLKSRSSEGRHRRDNIDK. Over residues 515–530 the composition is skewed to polar residues; the sequence is QMTSSAEKPSVSQTSE. The segment covering 542 to 555 has biased composition (basic and acidic residues); the sequence is RSSEGRHRRDNIDK. Phosphothreonine is present on T619. Disordered regions lie at residues 653–676, 693–717, and 755–795; these read QKSS…KKEQ, HNQQ…SDWP, and DKNP…SKGK. Phosphoserine is present on residues S660 and S664. 2 stretches are compositionally biased toward polar residues: residues 695–713 and 755–764; these read QQQN…NAKQ and DKNPSASKNV. S936 is subject to Phosphoserine. T938 is modified (phosphothreonine). Positions 962-1003 are disordered; it reads QLIDYSRNKNVKNHKSGKSRSSLEKGQPSSKMTPSKNITKKM. Positions 970–979 are enriched in basic residues; it reads KNVKNHKSGK. Polar residues predominate over residues 988-998; it reads QPSSKMTPSKN. Residues S1136, S1138, S1145, S1161, and S1177 each carry the phosphoserine modification. At T1189 the chain carries Phosphothreonine. Residues S1204, S1234, S1253, S1295, and S1297 each carry the phosphoserine modification. Phosphothreonine is present on T1339.

This sequence belongs to the SYCP2 family. In terms of assembly, component of the lateral elements of synaptonemal complexes. Heterodimer with SYCP3. Interacts with SMC1A and SMC3. Interacts with TEX11. Post-translationally, phosphorylated.

The protein resides in the nucleus. Its subcellular location is the chromosome. Its function is as follows. Major component of the axial/lateral elements of synaptonemal complexes (SCS) during meiotic prophase. Plays a role in the assembly of synaptonemal complexes. Required for normal meiotic chromosome synapsis during oocyte and spermatocyte development and for normal male and female fertility. Required for insertion of SYCP3 into synaptonemal complexes. May be involved in the organization of chromatin by temporarily binding to DNA scaffold attachment regions. Requires SYCP3, but not SYCP1, in order to be incorporated into the axial/lateral elements. This chain is Synaptonemal complex protein 2 (SYCP2), found in Homo sapiens (Human).